The following is a 668-amino-acid chain: DNA ligase (668 aa).

NAD(+) contacts are provided by residues 37 to 41 (DAVYD), 86 to 87 (SM), and E116. K118 functions as the N6-AMP-lysine intermediate in the catalytic mechanism. NAD(+) is bound by residues R139, E173, K288, and K312. Residues C406, C409, C424, and C429 each contribute to the Zn(2+) site. The 79-residue stretch at 590 to 668 (APDNFFKEKT…EQEAIAKIEK (79 aa)) folds into the BRCT domain.

The protein belongs to the NAD-dependent DNA ligase family. LigA subfamily. It depends on Mg(2+) as a cofactor. Mn(2+) serves as cofactor.

It catalyses the reaction NAD(+) + (deoxyribonucleotide)n-3'-hydroxyl + 5'-phospho-(deoxyribonucleotide)m = (deoxyribonucleotide)n+m + AMP + beta-nicotinamide D-nucleotide.. Functionally, DNA ligase that catalyzes the formation of phosphodiester linkages between 5'-phosphoryl and 3'-hydroxyl groups in double-stranded DNA using NAD as a coenzyme and as the energy source for the reaction. It is essential for DNA replication and repair of damaged DNA. In Lactobacillus gasseri (strain ATCC 33323 / DSM 20243 / BCRC 14619 / CIP 102991 / JCM 1131 / KCTC 3163 / NCIMB 11718 / NCTC 13722 / AM63), this protein is DNA ligase.